The primary structure comprises 61 residues: ATP synthase subunit J, mitochondrial (61 aa).

A helical membrane pass occupies residues 13-32 (LVKYYWPFFVGFGLTFYGVA).

F-type ATP synthases have 2 components, the catalytic core F(1) and the membrane-embedded component F(0), linked together by a central stalk and a peripheral stalk. The central stalk, also called rotor shaft, is often seen as part of F(1). The peripheral stalk is seen as part of F(0). F(0) contains the membrane channel next to the rotor. F-type ATP synthases form dimers but each monomer functions independently in ATP generation. The dimer consists of 18 different polypeptides: ATP1 (subunit alpha, part of F(1), 3 molecules per monomer), ATP2 (subunit beta, part of F(1), 3 molecules per monomer), ATP3 (subunit gamma, part of the central stalk), ATP4 (subunit b, part of the peripheral stalk), ATP5/OSCP (subunit 5/OSCP, part of the peripheral stalk), ATP6 (subunit a, part of the peripheral stalk), ATP7 (subunit d, part of the peripheral stalk), ATP8 (subunit 8, part of the peripheral stalk), OLI1 (subunit c, part of the rotor, 10 molecules per monomer), ATP14 (subunit h, part of the peripheral stalk), ATP15 (subunit epsilon, part of the central stalk), ATP16 (subunit delta, part of the central stalk), ATP17 (subunit f, part of the peripheral stalk), ATP18 (subunit i/j, part of the peripheral stalk). Dimer-specific subunits are ATP19 (subunit k, at interface between monomers), ATP20 (subunit g, at interface between monomers), TIM11 (subunit e, at interface between monomers). Also contains subunit L.

The protein localises to the mitochondrion inner membrane. Functionally, mitochondrial membrane ATP synthase (F(1)F(0) ATP synthase or Complex V) produces ATP from ADP in the presence of a proton gradient across the membrane which is generated by electron transport complexes of the respiratory chain. F-type ATP synthases consist of two structural domains, F(1) - containing the extramembraneous catalytic core, and F(0) - containing the membrane proton channel, linked together by a central stalk and a peripheral stalk. During catalysis, ATP synthesis in the catalytic domain of F(1) is coupled via a rotary mechanism of the central stalk subunits to proton translocation. Part of the complex F(0) domain. Minor subunit located with subunit a/ATP6 in the membrane. In Pichia angusta (Yeast), this protein is ATP synthase subunit J, mitochondrial.